The chain runs to 129 residues: Fluoride-specific ion channel FluC 2 (129 aa).

The helical transmembrane segment at 19 to 39 (GLGLVVPAAAVGGFPLGTLFI) threads the bilayer. Na(+) contacts are provided by Gly74 and Thr77. The chain crosses the membrane as a helical span at residues 95-115 (FGMAAVYIAASLFGGLLASWA).

The protein belongs to the fluoride channel Fluc/FEX (TC 1.A.43) family.

Its subcellular location is the cell membrane. The catalysed reaction is fluoride(in) = fluoride(out). Its activity is regulated as follows. Na(+) is not transported, but it plays an essential structural role and its presence is essential for fluoride channel function. In terms of biological role, fluoride-specific ion channel. Important for reducing fluoride concentration in the cell, thus reducing its toxicity. The polypeptide is Fluoride-specific ion channel FluC 2 (Geobacillus kaustophilus (strain HTA426)).